The primary structure comprises 364 residues: Flavonoid 3'-O-methyltransferase 3 (364 aa).

Asp-232 lines the S-adenosyl-L-methionine pocket. His-270 serves as the catalytic Proton acceptor.

The protein belongs to the class I-like SAM-binding methyltransferase superfamily. Cation-independent O-methyltransferase family. Homodimer.

It carries out the reaction quercetin + S-adenosyl-L-methionine = isorhamnetin + S-adenosyl-L-homocysteine + H(+). It catalyses the reaction luteolin + S-adenosyl-L-methionine = chrysoeriol + S-adenosyl-L-homocysteine + H(+). The catalysed reaction is a 3'-hydroxyflavone + S-adenosyl-L-methionine = a 3'-methoxyflavone + S-adenosyl-L-homocysteine + H(+). The enzyme catalyses rhamnetin + S-adenosyl-L-methionine = rhamnacene + S-adenosyl-L-homocysteine + H(+). It carries out the reaction 3',4',7,8-tetrahydroxyflavone + S-adenosyl-L-methionine = 4',7,8-trihydroxy-3'-methoxyflavone-7-olate + S-adenosyl-L-homocysteine + H(+). It catalyses the reaction taxifolin + S-adenosyl-L-methionine = taxifolin 3'-methyl ether + S-adenosyl-L-homocysteine + H(+). It functions in the pathway flavonoid metabolism. Flavonoid 3'-O-methyltransferase involved in the biosynthesis of polymethoxylated flavonoids natural products such as pebrellin, aroma compounds which contribute to the flavor of peppermint, and exhibit pharmacological activities such as anti-allergic, anti-oxidant, antibacterial, anti-proliferative, and anti-inflammatory effects. Catalyzes S-adenosylmethionine-dependent regioselective 3'-O-methylation of flavonoids; active on various hydroxylated flavonoid substrates, including quercetin, rhamnetin, luteolin (LUT), 7,8,3'4'-tetrahydroxy-flavone and taxifolin, and, with a lower efficiency, eupatorin and hesperetin. The polypeptide is Flavonoid 3'-O-methyltransferase 3 (Mentha piperita (Peppermint)).